The chain runs to 542 residues: MHRRNLLKASMAIAAYTGLSATGLLASRAWAASGGAADGEAQAFDFETLKRQAKQLAGSAYQDTKQVLPPTLATMTPQNFNAIRYDGEHSLWKENKGQLDVQFFHVGMGFRQPVRMYSVDPKTRTAREVHFRPQLFNYENTSVDTQQLKGDLGFAGFKLFKAPELDRHDVVSFLGASYFRAVDATGQYGLSARGLAVDTYAKKREEFPDFTKFWFETPDQNATRFVVYALLDSPSATGAYRFDIDCQAERVVMEVDAHINARTAIEQLGIAPMTSMFSCGTHERRMCDTIHPQIHDSDRLAMWRGNGEWICRPLNNPATLQFNAFADTDPKGFGLVQTDHEFANYQDTVDWYSKRPSLWVEPTTAWGEGSIDLLEIPTTGETLDNIVAFWTPKKPVAAGDSLNYGYKLYWSALPPVGTPLARVHATRSGMGGFVEGWAPGEHYPPVWARRFAVDFTGGGLDRLPQGTGIEPVVTCSNGKVQDFSVLVLDDIKGYRILFDWYPTNDSVEPVELRLFIRTNDRTLSETWLYQYFPPAPDKRKYP.

A signal peptide (tat-type signal) is located at residues 1–31; that stretch reads MHRRNLLKASMAIAAYTGLSATGLLASRAWA.

The protein belongs to the OpgD/OpgG family. Predicted to be exported by the Tat system. The position of the signal peptide cleavage has not been experimentally proven.

Its subcellular location is the periplasm. It functions in the pathway glycan metabolism; osmoregulated periplasmic glucan (OPG) biosynthesis. Probably involved in the control of the structural glucose backbone of osmoregulated periplasmic glucans (OPGs). In Pseudomonas fluorescens (strain Pf0-1), this protein is Glucans biosynthesis protein D.